We begin with the raw amino-acid sequence, 301 residues long: Phosphatidylglycerol--prolipoprotein diacylglyceryl transferase (301 aa).

7 helical membrane-spanning segments follow: residues 17 to 37 (LAVR…IVVG), 59 to 79 (MLFY…VLFY), 97 to 117 (GGMS…LFAW), 129 to 149 (FVAP…FING), 203 to 223 (PSQL…LWLF), 230 to 250 (VGAA…TVEF), and 257 to 277 (FLGL…PMII). Arginine 142 is an a 1,2-diacyl-sn-glycero-3-phospho-(1'-sn-glycerol) binding site.

The protein belongs to the Lgt family.

The protein resides in the cell inner membrane. The enzyme catalyses L-cysteinyl-[prolipoprotein] + a 1,2-diacyl-sn-glycero-3-phospho-(1'-sn-glycerol) = an S-1,2-diacyl-sn-glyceryl-L-cysteinyl-[prolipoprotein] + sn-glycerol 1-phosphate + H(+). The protein operates within protein modification; lipoprotein biosynthesis (diacylglyceryl transfer). In terms of biological role, catalyzes the transfer of the diacylglyceryl group from phosphatidylglycerol to the sulfhydryl group of the N-terminal cysteine of a prolipoprotein, the first step in the formation of mature lipoproteins. In Paraburkholderia phymatum (strain DSM 17167 / CIP 108236 / LMG 21445 / STM815) (Burkholderia phymatum), this protein is Phosphatidylglycerol--prolipoprotein diacylglyceryl transferase.